The primary structure comprises 398 residues: CCA-adding enzyme (398 aa).

Gly-32 and Arg-35 together coordinate ATP. Residues Gly-32 and Arg-35 each coordinate CTP. Residues Asp-45 and Asp-47 each contribute to the Mg(2+) site. Residues Arg-116, Asp-159, Arg-162, Arg-165, and Arg-168 each contribute to the ATP site. CTP contacts are provided by Arg-116, Asp-159, Arg-162, Arg-165, and Arg-168.

This sequence belongs to the tRNA nucleotidyltransferase/poly(A) polymerase family. Bacterial CCA-adding enzyme type 3 subfamily. As to quaternary structure, homodimer. Mg(2+) serves as cofactor.

The catalysed reaction is a tRNA precursor + 2 CTP + ATP = a tRNA with a 3' CCA end + 3 diphosphate. It catalyses the reaction a tRNA with a 3' CCA end + 2 CTP + ATP = a tRNA with a 3' CCACCA end + 3 diphosphate. In terms of biological role, catalyzes the addition and repair of the essential 3'-terminal CCA sequence in tRNAs without using a nucleic acid template. Adds these three nucleotides in the order of C, C, and A to the tRNA nucleotide-73, using CTP and ATP as substrates and producing inorganic pyrophosphate. tRNA 3'-terminal CCA addition is required both for tRNA processing and repair. Also involved in tRNA surveillance by mediating tandem CCA addition to generate a CCACCA at the 3' terminus of unstable tRNAs. While stable tRNAs receive only 3'-terminal CCA, unstable tRNAs are marked with CCACCA and rapidly degraded. This is CCA-adding enzyme from Lactobacillus gasseri (strain ATCC 33323 / DSM 20243 / BCRC 14619 / CIP 102991 / JCM 1131 / KCTC 3163 / NCIMB 11718 / NCTC 13722 / AM63).